A 608-amino-acid polypeptide reads, in one-letter code: Eukaryotic translation initiation factor 2A (608 aa).

Residues 1-42 (MSAPNNNNNNTTTTTTTSPSPSQSSPTLTSVASNSTTTTTTE) form a disordered region. WD repeat units follow at residues 115-161 (INRP…ILYK), 207-255 (IKLQ…EYCS), 310-350 (NIKG…PLVD), and 351-393 (FGLN…RICG). Low complexity-rich tracts occupy residues 466–478 (SIQQ…PQPQ) and 520–544 (STFK…TTKP). Disordered regions lie at residues 466–499 (SIQQ…TSPP) and 520–554 (STFK…RELT). The span at 545–554 (AADEPKRELT) shows a compositional bias: basic and acidic residues. The stretch at 550 to 608 (KRELTPIEKKIRNVERKLKEVEVLKEKLNSGEFIPPTAIEKINNEQKFLEELRKLQSEL) forms a coiled coil.

Belongs to the WD repeat EIF2A family.

Functionally, functions in the early steps of protein synthesis of a small number of specific mRNAs. Acts by directing the binding of methionyl-tRNAi to 40S ribosomal subunits. In contrast to the eIF-2 complex, it binds methionyl-tRNAi to 40S subunits in a codon-dependent manner, whereas the eIF-2 complex binds methionyl-tRNAi to 40S subunits in a GTP-dependent manner. This is Eukaryotic translation initiation factor 2A (eif2a) from Dictyostelium discoideum (Social amoeba).